Consider the following 1953-residue polypeptide: TATA-binding protein-associated factor mot1 (1953 aa).

The HEAT 1 repeat unit spans residues 36-74 (PDELYNLLGRVVPYLKSKNWDTRVAAAKAIGGIVENVPV). The interval 79-141 (RTSPVKKEET…KLEEERLSTR (63 aa)) is disordered. Basic and acidic residues predominate over residues 98-108 (TEEKPFIKTEE). Positions 113–130 (SSQSQVVVSSNLTSNSEV) are enriched in low complexity. The segment covering 131–141 (SKLEEERLSTR) has biased composition (basic and acidic residues). The residue at position 144 (serine 144) is a Phosphoserine. Positions 240–278 (DNVGSNSKGSPTTSIPEHKTSINNNKPEDTPTPSENVHL) are disordered. Over residues 242 to 276 (VGSNSKGSPTTSIPEHKTSINNNKPEDTPTPSENV) the composition is skewed to polar residues. HEAT repeat units follow at residues 358 to 396 (VWPF…YAGF), 513 to 551 (SDYL…KLVQ), 554 to 592 (LSSC…LCSF), and 608 to 646 (EFSF…VQTS). Disordered stretches follow at residues 730-762 (SGQP…KDDP) and 1078-1103 (DDND…KSSL). HEAT repeat units follow at residues 1191–1229 (QSEI…SNAA) and 1270–1311 (VRIL…LVPL). Residues 1370 to 1543 (AFLNKYELHG…WSLFDFLMPG (174 aa)) form the Helicase ATP-binding domain. 1383-1390 (DDMGLGKT) provides a ligand contact to ATP. Positions 1494-1497 (DEGH) match the DEGH box motif. The HEAT 8 repeat unit spans residues 1580–1623 (EAIHKQVLPFMLRRLKEDVLADLPPKIIQDYYCDMSDLQRKLLN). The 153-residue stretch at 1725–1877 (GIDSALTNAV…STVVNQQNAG (153 aa)) folds into the Helicase C-terminal domain. Residues 1901 to 1920 (QNIDKEESEDAAGRGLSGTS) form a disordered region.

This sequence belongs to the SNF2/RAD54 helicase family. As to quaternary structure, forms a complex with TBP which binds TATA DNA.

The protein resides in the nucleus. Regulates transcription in association with TATA binding protein (TBP). Removes TBP from the TATA box via its ATPase activity. The polypeptide is TATA-binding protein-associated factor mot1 (Schizosaccharomyces pombe (strain 972 / ATCC 24843) (Fission yeast)).